The primary structure comprises 133 residues: Ribosome-binding factor A (133 aa).

The protein belongs to the RbfA family. In terms of assembly, monomer. Binds 30S ribosomal subunits, but not 50S ribosomal subunits or 70S ribosomes.

Its subcellular location is the cytoplasm. In terms of biological role, one of several proteins that assist in the late maturation steps of the functional core of the 30S ribosomal subunit. Associates with free 30S ribosomal subunits (but not with 30S subunits that are part of 70S ribosomes or polysomes). Required for efficient processing of 16S rRNA. May interact with the 5'-terminal helix region of 16S rRNA. The protein is Ribosome-binding factor A of Synechocystis sp. (strain ATCC 27184 / PCC 6803 / Kazusa).